Here is a 358-residue protein sequence, read N- to C-terminus: Peptide chain release factor 1 (358 aa).

At Gln237 the chain carries N5-methylglutamine.

Belongs to the prokaryotic/mitochondrial release factor family. Methylated by PrmC. Methylation increases the termination efficiency of RF1.

It localises to the cytoplasm. In terms of biological role, peptide chain release factor 1 directs the termination of translation in response to the peptide chain termination codons UAG and UAA. This is Peptide chain release factor 1 from Streptomyces avermitilis (strain ATCC 31267 / DSM 46492 / JCM 5070 / NBRC 14893 / NCIMB 12804 / NRRL 8165 / MA-4680).